A 125-amino-acid chain; its full sequence is UPF0734 protein DDB_G0273871/DDB_G0273177 (125 aa).

Belongs to the UPF0734 family.

This chain is UPF0734 protein DDB_G0273871/DDB_G0273177, found in Dictyostelium discoideum (Social amoeba).